The primary structure comprises 47 residues: Potassium channel toxin gamma-KTx 5.2 (47 aa).

4 disulfide bridges follow: Cys-5/Cys-23, Cys-11/Cys-34, Cys-20/Cys-39, and Cys-24/Cys-41.

Belongs to the ergtoxin family. Gamma-KTx 5 subfamily. As to expression, expressed by the venom gland.

The protein resides in the secreted. In terms of biological role, reversibly blocks Kv11/ERG potassium channels. In Centruroides gracilis (Slenderbrown scorpion), this protein is Potassium channel toxin gamma-KTx 5.2.